Consider the following 314-residue polypeptide: Ribonuclease Z (314 aa).

Zn(2+) is bound by residues histidine 60, histidine 62, aspartate 64, histidine 65, histidine 140, aspartate 209, and histidine 269. Aspartate 64 functions as the Proton acceptor in the catalytic mechanism.

This sequence belongs to the RNase Z family. In terms of assembly, homodimer. It depends on Zn(2+) as a cofactor.

It catalyses the reaction Endonucleolytic cleavage of RNA, removing extra 3' nucleotides from tRNA precursor, generating 3' termini of tRNAs. A 3'-hydroxy group is left at the tRNA terminus and a 5'-phosphoryl group is left at the trailer molecule.. Functionally, zinc phosphodiesterase, which displays some tRNA 3'-processing endonuclease activity. Probably involved in tRNA maturation, by removing a 3'-trailer from precursor tRNA. This is Ribonuclease Z from Methanococcus maripaludis (strain C5 / ATCC BAA-1333).